The chain runs to 396 residues: Purine ribonucleoside efflux pump NepI (396 aa).

The Cytoplasmic portion of the chain corresponds to 1–21; the sequence is MSEFIAENRGADAITRPNWSA. Residues 22-42 traverse the membrane as a helical segment; that stretch reads VFSVAFCVACLIIVEFLPVSL. Residues 43–54 lie on the Periplasmic side of the membrane; that stretch reads LTPMAQDLGISE. A helical transmembrane segment spans residues 55–75; sequence GVAGQSVTVTAFVAMFASLFI. The Cytoplasmic segment spans residues 76-85; sequence TQTIQATDRR. Residues 86–106 traverse the membrane as a helical segment; it reads YVVILFAVLLTLSCLLVSFAN. Position 107 (serine 107) is a topological domain, periplasmic. Residues 108-128 traverse the membrane as a helical segment; sequence FSLLLIGRACLGLALGGFWAM. Residues 129–147 are Cytoplasmic-facing; the sequence is SASLTMRLVPPRTVPKALS. A helical membrane pass occupies residues 148–168; sequence VIFGAVSIALVIAAPLGCFLG. Residues 169-175 lie on the Periplasmic side of the membrane; sequence ELIGWRN. Residues 176-196 traverse the membrane as a helical segment; that stretch reads VFNAAAAMGVLCIFWIIKSLP. The Cytoplasmic segment spans residues 197–215; sequence SLPGEPSHQKQNTFRLLQR. Residues 216–236 form a helical membrane-spanning segment; that stretch reads PGVMAGMIAIFMSFAGQFAFF. The Periplasmic portion of the chain corresponds to 237–255; sequence TYIRPVYMTLAGFGVDGLT. The helical transmembrane segment at 256–276 threads the bilayer; the sequence is LVLLSFGIASFVGTSLSSFIL. Residues 277–281 lie on the Cytoplasmic side of the membrane; it reads KRSVK. The chain crosses the membrane as a helical span at residues 282–302; that stretch reads LALAGAPFVLALSALVLTLWG. The Periplasmic segment spans residues 303-305; it reads SDK. Residues 306–326 traverse the membrane as a helical segment; that stretch reads IVATGVAIIWGLTFALIPVGW. Residues 327-343 lie on the Cytoplasmic side of the membrane; that stretch reads STWITRSLADQAEKAGS. A helical membrane pass occupies residues 344–364; it reads IQVAVIQLANTCGAAIGGYAL. Residues 365–366 lie on the Periplasmic side of the membrane; that stretch reads DN. Residues 367-387 form a helical membrane-spanning segment; sequence IGLTSPLMLSGTLMLLTALLV. Residues 388-396 are Cytoplasmic-facing; that stretch reads TAKVKMKKS.

It belongs to the major facilitator superfamily. DHA1 family. NepI (TC 2.A.1.2.26) subfamily.

It localises to the cell inner membrane. It catalyses the reaction inosine(in) + H(+)(out) = inosine(out) + H(+)(in). The catalysed reaction is guanosine(in) + H(+)(out) = guanosine(out) + H(+)(in). Involved in the efflux of purine ribonucleosides, such as inosine and guanosine. This is Purine ribonucleoside efflux pump NepI from Escherichia coli O157:H7.